The primary structure comprises 446 residues: tRNA-2-methylthio-N(6)-dimethylallyladenosine synthase (446 aa).

The region spanning 3 to 119 (KKIFIKTFGC…INEAILNHLK (117 aa)) is the MTTase N-terminal domain. [4Fe-4S] cluster contacts are provided by Cys-12, Cys-48, Cys-82, Cys-158, Cys-162, and Cys-165. The region spanning 144-374 (KDSKVSSFLT…QEKLFNNQIK (231 aa)) is the Radical SAM core domain. Residues 377–439 (KSLENKILNV…QNSLFGKLTE (63 aa)) form the TRAM domain.

Belongs to the methylthiotransferase family. MiaB subfamily. In terms of assembly, monomer. It depends on [4Fe-4S] cluster as a cofactor.

The protein resides in the cytoplasm. It catalyses the reaction N(6)-dimethylallyladenosine(37) in tRNA + (sulfur carrier)-SH + AH2 + 2 S-adenosyl-L-methionine = 2-methylsulfanyl-N(6)-dimethylallyladenosine(37) in tRNA + (sulfur carrier)-H + 5'-deoxyadenosine + L-methionine + A + S-adenosyl-L-homocysteine + 2 H(+). Its function is as follows. Catalyzes the methylthiolation of N6-(dimethylallyl)adenosine (i(6)A), leading to the formation of 2-methylthio-N6-(dimethylallyl)adenosine (ms(2)i(6)A) at position 37 in tRNAs that read codons beginning with uridine. This chain is tRNA-2-methylthio-N(6)-dimethylallyladenosine synthase, found in Pelagibacter ubique (strain HTCC1062).